We begin with the raw amino-acid sequence, 1465 residues long: Transcriptional elongation regulator MINIYO (1465 aa).

Disordered stretches follow at residues 27 to 85 (KGIS…AEER), 186 to 211 (LNAS…ESDI), and 1113 to 1135 (TIHE…SSTI).

This sequence belongs to the RPAP1 family. As to quaternary structure, interacts with HAG3, NRPB3 and NRPB10L. In terms of tissue distribution, expressed in root and shoot apices and in leaf and flower primordia. Detected in the endosperm, embryo, meristems and in organ primordia, but not in mature cells. Found exclusively in the vascular bundles in mature leaves.

The protein localises to the cytoplasm. It localises to the nucleus. Its function is as follows. Positive regulator of transcriptional elongation that is essential for cells to initiate differentiation. Interacts with RNA polymerase II and the Elongator complex and is required to sustain global levels of transcriptional elongation activity, specifically in differentiating tissues. The protein is Transcriptional elongation regulator MINIYO of Arabidopsis thaliana (Mouse-ear cress).